The chain runs to 1076 residues: DNA-directed RNA polymerase subunit beta (1076 aa).

This sequence belongs to the RNA polymerase beta chain family. In terms of assembly, in plastids the minimal PEP RNA polymerase catalytic core is composed of four subunits: alpha, beta, beta', and beta''. When a (nuclear-encoded) sigma factor is associated with the core the holoenzyme is formed, which can initiate transcription.

It is found in the plastid. The protein resides in the chloroplast. The catalysed reaction is RNA(n) + a ribonucleoside 5'-triphosphate = RNA(n+1) + diphosphate. DNA-dependent RNA polymerase catalyzes the transcription of DNA into RNA using the four ribonucleoside triphosphates as substrates. The chain is DNA-directed RNA polymerase subunit beta from Agrostis stolonifera (Creeping bentgrass).